The sequence spans 86 residues: uncharacterized protein (86 aa).

The helical transmembrane segment at valine 63 to phenylalanine 85 threads the bilayer.

It is found in the membrane. This is an uncharacterized protein from Dictyostelium discoideum (Social amoeba).